A 138-amino-acid polypeptide reads, in one-letter code: rRNA methyltransferase 1, mitochondrial (138 aa).

The transit peptide at 1-21 directs the protein to the mitochondrion; sequence MNNQPCSIVWRRFLTSKVKPA. Positions 92–113 are disordered; the sequence is KQDILSSKRQQEEHKSKYSRKS.

The protein belongs to the class IV-like SAM-binding methyltransferase superfamily. RNA methyltransferase TrmH family.

Its subcellular location is the mitochondrion. It carries out the reaction a guanosine in 21S rRNA + S-adenosyl-L-methionine = a 2'-O-methylguanosine in 21S rRNA + S-adenosyl-L-homocysteine + H(+). Its function is as follows. S-adenosyl-L-methionine-dependent 2'-O-ribose methyltransferase that catalyzes the formation of the 2'-O-methylguanosine corresponding to position 2270 in S.cerevisiae 21S mitochondrial large ribosomal RNA, a universally conserved modification in the peptidyl transferase domain of the 21S rRNA. The polypeptide is rRNA methyltransferase 1, mitochondrial (Lachancea kluyveri (strain ATCC 58438 / CBS 3082 / BCRC 21498 / NBRC 1685 / JCM 7257 / NCYC 543 / NRRL Y-12651) (Yeast)).